A 322-amino-acid polypeptide reads, in one-letter code: Dioxygenase himG (322 aa).

The Fe cation site is built by His-148 and His-229.

The protein belongs to the PhyH family. Homodimer. Fe cation is required as a cofactor.

Its pathway is secondary metabolite biosynthesis. In terms of biological role, polyketide synthase-nonribosomal peptide synthetase; part of the him gene cluster that mediates the biosynthesis of himeic acid A, a ubiquitin-activating enzyme (E1) inhibitor. First, himA, together with the trans-enoyl reductase himH, catalyzes the formation of apolyketide chain, which is then condensed with leucine by the NRPS activity of himA. Dieckmann cyclization and release from himA gives a tetramic acid intermediate as the product of himA PKS-NRPS. HimG then catalyzes alpha-oxidation of the tetramic acid ring, with a subsequent rearrangement to yield apyrone intermediate. Two terminal methyl groups of polyketide and amide side chains are oxidized to carboxylic acids by himC cytochrome P450 monooxygenase to form himeic acid A. Himeic acid A is further converted to himeic acid B and C during culture growth. No gene responsible for pyrone to pyridone conversion was found in the him gene cluster and himeic acid A is non-enzymatically converted to himeic acid C by the incorporation of an ammonium nitrogen atom in a pH5 buffer, and to himeic acid B at a conversion ratio of 50% during incubation in MeOH for 5 days. The protein is Dioxygenase himG of Aspergillus japonicus.